Consider the following 199-residue polypeptide: Peroxiredoxin 2 (199 aa).

Positions 8–166 (AFIGQPAPNF…TLRLIQAFQF (159 aa)) constitute a Thioredoxin domain. Catalysis depends on Cys53, which acts as the Cysteine sulfenic acid (-SOH) intermediate.

Belongs to the peroxiredoxin family. AhpC/Prx1 subfamily. Homodimer; disulfide-linked, upon oxidation.

It carries out the reaction a hydroperoxide + [thioredoxin]-dithiol = an alcohol + [thioredoxin]-disulfide + H2O. In terms of biological role, thiol-specific peroxidase that catalyzes the reduction of hydrogen peroxide and organic hydroperoxides to water and alcohols, respectively. Plays a role in cell protection against oxidative stress by detoxifying peroxides and as sensor of hydrogen peroxide-mediated signaling events. This Brugia malayi (Filarial nematode worm) protein is Peroxiredoxin 2 (tsa-2).